A 281-amino-acid chain; its full sequence is MPGAPSPSAPSIALNDENTMPVLGMGVAGLSDDETERAVSAALEIGCRLIDTAAAYGNEAAVGRAIAASGIPRAELFVTTKVATADHGFTASREACKASLDRLGLDYVDLYLIHWPAPAAGKYVDAFGGLIQARGEGFTRSIGVSNFTEEHVSNVIDLTFVTPAVNQVELHPLLNQDELRKANAQHNVVTQSYTPLALGQLADNPTVTSIAGEYGKTPTQVLLRWNLQLGNAVIFGSSNAEHIATNLDVFEFELASQHMDAINGLNDGTRLREDPMTFAGV.

Y56 acts as the Proton donor in catalysis. NADPH is bound by residues L196, I234, S237, T245, N246, and R272.

This sequence belongs to the aldo/keto reductase family.

In Mycobacterium marinum (strain ATCC BAA-535 / M), this protein is Aldo-keto reductase MMAR_1744.